We begin with the raw amino-acid sequence, 371 residues long: 2-aminoethylphosphonate--pyruvate transaminase (371 aa).

N6-(pyridoxal phosphate)lysine is present on Lys-198.

It belongs to the class-V pyridoxal-phosphate-dependent aminotransferase family. PhnW subfamily. In terms of assembly, homodimer. Pyridoxal 5'-phosphate serves as cofactor.

It carries out the reaction (2-aminoethyl)phosphonate + pyruvate = phosphonoacetaldehyde + L-alanine. Involved in phosphonate degradation. This chain is 2-aminoethylphosphonate--pyruvate transaminase, found in Syntrophobacter fumaroxidans (strain DSM 10017 / MPOB).